We begin with the raw amino-acid sequence, 250 residues long: uncharacterized protein (250 aa).

This sequence belongs to the carbohydrate kinase PfkB family.

This is an uncharacterized protein from Archaeoglobus fulgidus (strain ATCC 49558 / DSM 4304 / JCM 9628 / NBRC 100126 / VC-16).